The chain runs to 50 residues: Defensin-like protein 1 (50 aa).

4 disulfides stabilise this stretch: C2/C50, C14/C35, C20/C44, and C24/C46.

Belongs to the DEFL family.

Its subcellular location is the secreted. Possesses antimicrobial activity sensitive to inorganic cations. Binds specifically to the fungal plasma membrane. Has no inhibitory effect on insect gut alpha-amylase. The polypeptide is Defensin-like protein 1 (Aesculus hippocastanum (Horse chestnut)).